An 82-amino-acid polypeptide reads, in one-letter code: MFFKKITLIPFVMLINLYRYCISPFIPARCRYYPTCSEYALEALKTHGILKGLYLTTRRLLRCHPLSKRDYYDPVPCKNKKG.

Belongs to the UPF0161 family.

The protein localises to the cell inner membrane. In terms of biological role, could be involved in insertion of integral membrane proteins into the membrane. The sequence is that of Putative membrane protein insertion efficiency factor from Francisella tularensis subsp. novicida (strain U112).